Reading from the N-terminus, the 153-residue chain is Ribosome maturation factor RimP (153 aa).

The protein belongs to the RimP family.

The protein resides in the cytoplasm. Functionally, required for maturation of 30S ribosomal subunits. The chain is Ribosome maturation factor RimP from Psychromonas ingrahamii (strain DSM 17664 / CCUG 51855 / 37).